Consider the following 212-residue polypeptide: Uridine kinase (212 aa).

13–20 (GGSGSGKT) contributes to the ATP binding site.

This sequence belongs to the uridine kinase family.

The protein resides in the cytoplasm. It carries out the reaction uridine + ATP = UMP + ADP + H(+). The catalysed reaction is cytidine + ATP = CMP + ADP + H(+). It functions in the pathway pyrimidine metabolism; CTP biosynthesis via salvage pathway; CTP from cytidine: step 1/3. The protein operates within pyrimidine metabolism; UMP biosynthesis via salvage pathway; UMP from uridine: step 1/1. The protein is Uridine kinase of Bacillus cereus (strain G9842).